The following is a 1036-amino-acid chain: Lethal(2) giant larvae protein homolog 1 (1036 aa).

WD repeat units lie at residues 38-71 (SALAFDPELRIMAIGTRSGAVKIYGAPGVEFTGL), 78-119 (VTQM…GLSF), 139-175 (VTVVLLAAGDTVVLGTESGSIFFLDVATLALLEGQTL), 199-233 (SLQGHLQDPSKILIGYSRGLLVIWSQATQSVEHVF), 239-271 (LESLCWGRGGSNIISSHSDGSYAIWSTDTGSPP), 289-331 (AINK…ETLV), 339-373 (VIDFFTVHSTQPEDECDNPQALAVLLEEELVVLDL), 395-473 (TCSA…YKLS), 517-592 (QKVA…RMLI), and 601-662 (TAVT…LRQS). Position 662 is a phosphoserine (serine 662). Residues 667–677 (RKSRVSGKKRT) show a composition bias toward basic residues. The interval 667–688 (RKSRVSGKKRTPAASSKLQEAN) is disordered. The span at 679-688 (AASSKLQEAN) shows a compositional bias: polar residues. WD repeat units follow at residues 722–782 (VRCL…KEVQ), 791–843 (AIAV…VSAK), 848–901 (LTAH…VHYS), and 915–938 (VFTRHGQGFYLISPSEFERFSLSA). A Phosphothreonine modification is found at threonine 957. Phosphoserine occurs at positions 964, 982, and 989. The tract at residues 980 to 1002 (PESCEGSPSSAHSKRADTMEPPE) is disordered.

It belongs to the WD repeat L(2)GL family. As to quaternary structure, associated with nonmuscle myosin II heavy chain. Interacts with PRKCI/aPKC, PARD6B/Par-6 and PARD6A. Interacts with STX4A. Interacts with RAB10 (GDP-bound form); the interaction is direct and promotes RAB10 association with membranes and activation through competition with the Rab inhibitor GDI1. Interacts with DCAF1. Post-translationally, phosphorylated by PRKCI. In terms of tissue distribution, widely expressed. Expressed in brain, ovary, testis, with moderate expression in lever, uterus, lung and kidney.

Its subcellular location is the early endosome membrane. It localises to the golgi apparatus. The protein localises to the trans-Golgi network membrane. The protein resides in the cell projection. It is found in the axon. Its subcellular location is the golgi apparatus membrane. It localises to the cytoplasm. The protein localises to the cytoskeleton. Cortical cytoskeleton protein found in a complex involved in maintaining cell polarity and epithelial integrity. Involved in the regulation of mitotic spindle orientation, proliferation, differentiation and tissue organization of neuroepithelial cells. Involved in axonogenesis through RAB10 activation thereby regulating vesicular membrane trafficking toward the axonal plasma membrane. This is Lethal(2) giant larvae protein homolog 1 (LLGL1) from Bos taurus (Bovine).